The chain runs to 190 residues: Syndecan-2-B (190 aa).

Residues 1-22 form the signal peptide; sequence MRNVWLIVPFALLAAFSGETWA. Topologically, residues 23 to 136 are extracellular; the sequence is QADRDLYIDS…NLFHRTEVLA (114 aa). The segment at 34 to 60 is disordered; that stretch reads ESSGNYPVDDDDYSSGSGSGIPAHDDD. O-linked (Xyl...) (glycosaminoglycan) serine glycosylation is found at serine 36, serine 48, serine 50, and serine 52. A helical transmembrane segment spans residues 137–157; the sequence is AVIAGGGIGFLFAVFLILLLV. The Cytoplasmic portion of the chain corresponds to 158-190; the sequence is YRMRKKDEGSYDLGERKPSSAVYQKAPTKEFYA. Residues 167–190 form a disordered region; sequence SYDLGERKPSSAVYQKAPTKEFYA.

This sequence belongs to the syndecan proteoglycan family. Post-translationally, O-glycosylated; contains both heparan sulfate and chondroitin sulfate.

Its subcellular location is the membrane. In terms of biological role, cell surface proteoglycan. The polypeptide is Syndecan-2-B (sdc2-b) (Xenopus laevis (African clawed frog)).